The following is a 1184-amino-acid chain: DNA polymerase III subunit alpha (1184 aa).

Belongs to the DNA polymerase type-C family. DnaE subfamily. In terms of assembly, the Pol III holoenzyme complex contains at least 10 different subunits organized into 3 functionally essential subassemblies: the Pol III core, the beta sliding clamp processivity factor and the clamp-loading complex. The Pol III core (subunits alpha, epsilon and theta) contains the polymerase and the 3'-5' exonuclease proofreading activities. The polymerase is tethered to the template via the dimeric beta sliding clamp processivity factor. The clamp loader (also called gamma complex) assembles the beta sliding clamp onto the primed template and plays a central role in the organization and communication at the replication fork. The clamp-loading complex contains delta, delta', psi and chi, and 3 copies of either or both of two different DnaX proteins, gamma and tau. The DNA replisome complex has a single clamp loader (3 tau and 1 each of delta, delta', psi and chi subunits) which binds 3 Pol III cores (1 core on the leading strand and 2 on the lagging strand) each with a beta sliding clamp dimer. Interacts with the beta-sliding clamp (DnaN). Co-immunoprecipitates with DarG in the presence and absence of darT.

The protein localises to the cytoplasm. It catalyses the reaction DNA(n) + a 2'-deoxyribonucleoside 5'-triphosphate = DNA(n+1) + diphosphate. Its function is as follows. DNA polymerase III is a complex, multichain enzyme responsible for most of the replicative synthesis in bacteria. Pol III also exhibits 3' to 5' exonuclease activity. The alpha chain is the DNA polymerase. The protein is DNA polymerase III subunit alpha (dnaE1) of Mycobacterium tuberculosis (strain ATCC 25618 / H37Rv).